A 340-amino-acid polypeptide reads, in one-letter code: Annexin A2-B (340 aa).

Residues 2-25 (ALIHEILGKLSLEGNQSSSRQSKL) are P10 binding site. A Phosphoserine; by PKC modification is found at Ser-27. Annexin repeat units follow at residues 34–105 (FDAE…GLIK), 106–177 (TRPQ…ALAK), 190–262 (EKID…NLVQ), and 266–337 (NKPL…NLCG).

This sequence belongs to the annexin family. As to quaternary structure, tetramer of 2 light chains (p10 proteins) and 2 heavy chains (p36 proteins). In terms of tissue distribution, adult brain, heart, striated muscle, liver, kidney, and very high levels in skin.

It is found in the secreted. Its subcellular location is the extracellular space. The protein localises to the extracellular matrix. It localises to the basement membrane. In terms of biological role, calcium-regulated membrane-binding protein whose affinity for calcium is greatly enhanced by anionic phospholipids. It binds two calcium ions with high affinity. This is Annexin A2-B (anxa2-b) from Xenopus laevis (African clawed frog).